Here is a 256-residue protein sequence, read N- to C-terminus: tRNA-cytidine(32) 2-sulfurtransferase (256 aa).

The PP-loop motif signature appears at 35–40; that stretch reads SGGKDS. [4Fe-4S] cluster-binding residues include Cys-110, Cys-113, and Cys-201.

It belongs to the TtcA family. In terms of assembly, homodimer. The cofactor is Mg(2+). [4Fe-4S] cluster serves as cofactor.

It is found in the cytoplasm. The enzyme catalyses cytidine(32) in tRNA + S-sulfanyl-L-cysteinyl-[cysteine desulfurase] + AH2 + ATP = 2-thiocytidine(32) in tRNA + L-cysteinyl-[cysteine desulfurase] + A + AMP + diphosphate + H(+). Its pathway is tRNA modification. Its function is as follows. Catalyzes the ATP-dependent 2-thiolation of cytidine in position 32 of tRNA, to form 2-thiocytidine (s(2)C32). The sulfur atoms are provided by the cysteine/cysteine desulfurase (IscS) system. The sequence is that of tRNA-cytidine(32) 2-sulfurtransferase from Coxiella burnetii (strain Dugway 5J108-111).